The chain runs to 88 residues: Small ribosomal subunit protein bS20 (88 aa).

The disordered stretch occupies residues 1 to 21 (MANTTSAKKATRKIARRTAVN).

It belongs to the bacterial ribosomal protein bS20 family.

In terms of biological role, binds directly to 16S ribosomal RNA. The chain is Small ribosomal subunit protein bS20 from Sinorhizobium fredii (strain NBRC 101917 / NGR234).